The chain runs to 78 residues: D-alanyl carrier protein (78 aa).

The Carrier domain maps to 1 to 78 (MNIQETVLNI…QIIQQVEALQ (78 aa)). An O-(pantetheine 4'-phosphoryl)serine modification is found at S36.

The protein belongs to the DltC family. Post-translationally, 4'-phosphopantetheine is transferred from CoA to a specific serine of apo-DCP.

The protein resides in the cytoplasm. Its pathway is cell wall biogenesis; lipoteichoic acid biosynthesis. Functionally, carrier protein involved in the D-alanylation of lipoteichoic acid (LTA). The loading of thioester-linked D-alanine onto DltC is catalyzed by D-alanine--D-alanyl carrier protein ligase DltA. The DltC-carried D-alanyl group is further transferred to cell membrane phosphatidylglycerol (PG) by forming an ester bond, probably catalyzed by DltD. D-alanylation of LTA plays an important role in modulating the properties of the cell wall in Gram-positive bacteria, influencing the net charge of the cell wall. The polypeptide is D-alanyl carrier protein (Enterococcus faecalis (strain ATCC 700802 / V583)).